A 259-amino-acid polypeptide reads, in one-letter code: Formate channel BtFdhC (259 aa).

At 1–26 (MAFHKPEQIAELVIEAGVQKVSQTLP) the chain is on the cytoplasmic side. A helical transmembrane segment spans residues 27–47 (AMLILGFLGGAFISLGFLLNI). Over 48–66 (RVLGNLPERWGSLVNVLGG) the chain is Periplasmic. Residues 67–97 (AVFPVGLMLVVLAGGELITGNMMSLSMALYA) traverse the membrane as a helical segment. Residues 98–108 (KKITLVSVLNN) are Cytoplasmic-facing. The chain crosses the membrane as a helical span at residues 109-130 (WVWITFMNFVGAIFVAYCFGHL). Topologically, residues 131 to 157 (GGLTEGDYLNKTVAIAEGKLHESFGRT) are periplasmic. The helical transmembrane segment at 158–176 (LILAIGCNWLVCLALWLAY) threads the bilayer. Topologically, residues 177 to 187 (GTSDFVGKIIG) are cytoplasmic. A helical transmembrane segment spans residues 188 to 216 (IWIPIMAFVVIGFQQVVANMFVISAVIFA). At 217-227 (GHLTWMDLARN) the chain is on the periplasmic side. Residues 228 to 250 (FVPVFIGNVIGGAGFVGFAYFAC) traverse the membrane as a helical segment. Residues 251–259 (YQKQHSNMK) are Cytoplasmic-facing.

Belongs to the FNT transporter (TC 1.A.16) family.

Its subcellular location is the cell inner membrane. The catalysed reaction is formate(in) = formate(out). Its function is as follows. Acts as a formate transporter. The sequence is that of Formate channel BtFdhC from Bacillus thuringiensis.